A 560-amino-acid polypeptide reads, in one-letter code: Membrane protein insertase YidC (560 aa).

The helical transmembrane segment at 1–21 (MDIKRTILIAALAIVSYVMVL) threads the bilayer. Positions 42–66 (VAPGLPDGVPAANNGASADVPSANA) are disordered. 5 consecutive transmembrane segments (helical) span residues 341–361 (LELT…FWLL), 367–387 (LLGN…GLFF), 437–457 (LGGC…YWVL), 468–488 (WMLW…PIIM), and 515–535 (PIIF…YWVV).

Belongs to the OXA1/ALB3/YidC family. Type 1 subfamily. Interacts with the Sec translocase complex via SecD. Specifically interacts with transmembrane segments of nascent integral membrane proteins during membrane integration.

Its subcellular location is the cell inner membrane. Required for the insertion and/or proper folding and/or complex formation of integral membrane proteins into the membrane. Involved in integration of membrane proteins that insert both dependently and independently of the Sec translocase complex, as well as at least some lipoproteins. Aids folding of multispanning membrane proteins. The sequence is that of Membrane protein insertase YidC from Pseudomonas putida (strain W619).